A 177-amino-acid polypeptide reads, in one-letter code: ATP synthase subunit delta (177 aa).

Belongs to the ATPase delta chain family. As to quaternary structure, F-type ATPases have 2 components, F(1) - the catalytic core - and F(0) - the membrane proton channel. F(1) has five subunits: alpha(3), beta(3), gamma(1), delta(1), epsilon(1). F(0) has three main subunits: a(1), b(2) and c(10-14). The alpha and beta chains form an alternating ring which encloses part of the gamma chain. F(1) is attached to F(0) by a central stalk formed by the gamma and epsilon chains, while a peripheral stalk is formed by the delta and b chains.

The protein resides in the cell inner membrane. Its function is as follows. F(1)F(0) ATP synthase produces ATP from ADP in the presence of a proton or sodium gradient. F-type ATPases consist of two structural domains, F(1) containing the extramembraneous catalytic core and F(0) containing the membrane proton channel, linked together by a central stalk and a peripheral stalk. During catalysis, ATP synthesis in the catalytic domain of F(1) is coupled via a rotary mechanism of the central stalk subunits to proton translocation. In terms of biological role, this protein is part of the stalk that links CF(0) to CF(1). It either transmits conformational changes from CF(0) to CF(1) or is implicated in proton conduction. The chain is ATP synthase subunit delta from Pasteurella multocida (strain Pm70).